The primary structure comprises 491 residues: Angiopoietin-related protein 1 (491 aa).

Residues 1 to 23 form the signal peptide; the sequence is MKAFIWTLSVLFFLLMGIGHGRG. A coiled-coil region spans residues 80–168; it reads ITRMDLENLK…LNVTTEMLKM (89 aa). N-linked (GlcNAc...) asparagine glycosylation is found at asparagine 160 and asparagine 188. A Fibrinogen C-terminal domain is found at 271–491; it reads FINEGPYKDC…AVQMLIKPID (221 aa). 2 disulfide bridges follow: cysteine 280–cysteine 309 and cysteine 432–cysteine 445.

It localises to the secreted. This Bos taurus (Bovine) protein is Angiopoietin-related protein 1 (ANGPTL1).